Consider the following 603-residue polypeptide: Glutamyl-tRNA(Gln) amidotransferase subunit B, mitochondrial (603 aa).

Disordered regions lie at residues 38–61 (RGRD…SNGA) and 72–91 (EQAR…PPEH). Positions 42–58 (WSSTSRRAIDTQTSGAS) are enriched in polar residues.

The protein belongs to the GatB/GatE family. GatB subfamily. Subunit of the heterotrimeric GatCAB amidotransferase (AdT) complex, composed of A, B and C subunits.

The protein resides in the mitochondrion. It carries out the reaction L-glutamyl-tRNA(Gln) + L-glutamine + ATP + H2O = L-glutaminyl-tRNA(Gln) + L-glutamate + ADP + phosphate + H(+). Functionally, allows the formation of correctly charged Gln-tRNA(Gln) through the transamidation of misacylated Glu-tRNA(Gln) in the mitochondria. The reaction takes place in the presence of glutamine and ATP through an activated gamma-phospho-Glu-tRNA(Gln). This chain is Glutamyl-tRNA(Gln) amidotransferase subunit B, mitochondrial, found in Paracoccidioides brasiliensis (strain Pb18).